The chain runs to 321 residues: UDP-N-acetylenolpyruvoylglucosamine reductase (321 aa).

The FAD-binding PCMH-type domain occupies 39–205; sequence RTGGLAELFY…TAALLEGEPG (167 aa). The active site involves R185. S234 serves as the catalytic Proton donor. The active site involves E304.

Belongs to the MurB family. Requires FAD as cofactor.

The protein localises to the cytoplasm. The enzyme catalyses UDP-N-acetyl-alpha-D-muramate + NADP(+) = UDP-N-acetyl-3-O-(1-carboxyvinyl)-alpha-D-glucosamine + NADPH + H(+). It participates in cell wall biogenesis; peptidoglycan biosynthesis. Cell wall formation. This is UDP-N-acetylenolpyruvoylglucosamine reductase from Bartonella quintana (strain Toulouse) (Rochalimaea quintana).